A 536-amino-acid chain; its full sequence is Membrane protein insertase YidC (536 aa).

Transmembrane regions (helical) follow at residues 5 to 25 (LIIA…IFPT), 353 to 373 (GNYG…FFPL), 418 to 438 (VNPL…FGLY), and 495 to 515 (MLML…GLVI).

Belongs to the OXA1/ALB3/YidC family. Type 1 subfamily. In terms of assembly, interacts with the Sec translocase complex via SecD. Specifically interacts with transmembrane segments of nascent integral membrane proteins during membrane integration.

It is found in the cell inner membrane. Functionally, required for the insertion and/or proper folding and/or complex formation of integral membrane proteins into the membrane. Involved in integration of membrane proteins that insert both dependently and independently of the Sec translocase complex, as well as at least some lipoproteins. Aids folding of multispanning membrane proteins. This Geobacter sp. (strain M21) protein is Membrane protein insertase YidC.